The primary structure comprises 284 residues: 4-diphosphocytidyl-2-C-methyl-D-erythritol kinase (284 aa).

Lys10 is a catalytic residue. Residue 92–102 participates in ATP binding; the sequence is PYGAGLGSGSS. Residue Asp134 is part of the active site.

This sequence belongs to the GHMP kinase family. IspE subfamily.

It catalyses the reaction 4-CDP-2-C-methyl-D-erythritol + ATP = 4-CDP-2-C-methyl-D-erythritol 2-phosphate + ADP + H(+). Its pathway is isoprenoid biosynthesis; isopentenyl diphosphate biosynthesis via DXP pathway; isopentenyl diphosphate from 1-deoxy-D-xylulose 5-phosphate: step 3/6. Functionally, catalyzes the phosphorylation of the position 2 hydroxy group of 4-diphosphocytidyl-2C-methyl-D-erythritol. The protein is 4-diphosphocytidyl-2-C-methyl-D-erythritol kinase of Salinibacter ruber (strain DSM 13855 / M31).